We begin with the raw amino-acid sequence, 103 residues long: Co-chaperonin GroES (103 aa).

The protein belongs to the GroES chaperonin family. As to quaternary structure, heptamer of 7 subunits arranged in a ring. Interacts with the chaperonin GroEL.

It localises to the cytoplasm. Together with the chaperonin GroEL, plays an essential role in assisting protein folding. The GroEL-GroES system forms a nano-cage that allows encapsulation of the non-native substrate proteins and provides a physical environment optimized to promote and accelerate protein folding. GroES binds to the apical surface of the GroEL ring, thereby capping the opening of the GroEL channel. This is Co-chaperonin GroES from Gloeothece citriformis (strain PCC 7424) (Cyanothece sp. (strain PCC 7424)).